A 134-amino-acid chain; its full sequence is UPF0412 protein YaaI (134 aa).

An N-terminal signal peptide occupies residues 1–23 (MRSVLTISASLLFGLALSSVAHA).

Belongs to the UPF0412 family.

This chain is UPF0412 protein YaaI, found in Salmonella paratyphi B (strain ATCC BAA-1250 / SPB7).